Consider the following 276-residue polypeptide: Glutamate racemase (276 aa).

Substrate contacts are provided by residues 12–13 (DS) and 44–45 (YG). The Proton donor/acceptor role is filled by Cys-76. 77–78 (NT) contacts substrate. Cys-187 functions as the Proton donor/acceptor in the catalytic mechanism. 188–189 (TH) contributes to the substrate binding site.

This sequence belongs to the aspartate/glutamate racemases family.

It catalyses the reaction L-glutamate = D-glutamate. It functions in the pathway cell wall biogenesis; peptidoglycan biosynthesis. Provides the (R)-glutamate required for cell wall biosynthesis. This is Glutamate racemase from Granulibacter bethesdensis (strain ATCC BAA-1260 / CGDNIH1).